A 396-amino-acid polypeptide reads, in one-letter code: NADH-quinone oxidoreductase subunit D 1 (396 aa).

It belongs to the complex I 49 kDa subunit family. In terms of assembly, NDH-1 is composed of 14 different subunits. Subunits NuoB, C, D, E, F, and G constitute the peripheral sector of the complex.

Its subcellular location is the cell inner membrane. The enzyme catalyses a quinone + NADH + 5 H(+)(in) = a quinol + NAD(+) + 4 H(+)(out). In terms of biological role, NDH-1 shuttles electrons from NADH, via FMN and iron-sulfur (Fe-S) centers, to quinones in the respiratory chain. The immediate electron acceptor for the enzyme in this species is believed to be ubiquinone. Couples the redox reaction to proton translocation (for every two electrons transferred, four hydrogen ions are translocated across the cytoplasmic membrane), and thus conserves the redox energy in a proton gradient. This Rhizobium etli (strain ATCC 51251 / DSM 11541 / JCM 21823 / NBRC 15573 / CFN 42) protein is NADH-quinone oxidoreductase subunit D 1.